A 709-amino-acid chain; its full sequence is Catalase HPII (709 aa).

A compositionally biased stretch (polar residues) spans 1–26 (MSEQNNEQRSQAAGTDTVDRGNSNAK). The tract at residues 1 to 32 (MSEQNNEQRSQAAGTDTVDRGNSNAKLEQLEA) is disordered. Catalysis depends on residues His-90 and Asn-163. Residue Tyr-377 participates in heme binding. Residues 419–443 (RASYEPNSIDGGWPKETPPAARNGG) are disordered.

Belongs to the catalase family. HPII subfamily. Heme serves as cofactor.

The protein resides in the cytoplasm. It carries out the reaction 2 H2O2 = O2 + 2 H2O. Its function is as follows. Decomposes hydrogen peroxide into water and oxygen; serves to protect cells from the toxic effects of hydrogen peroxide. The protein is Catalase HPII (katE) of Pseudomonas aeruginosa (strain ATCC 15692 / DSM 22644 / CIP 104116 / JCM 14847 / LMG 12228 / 1C / PRS 101 / PAO1).